The primary structure comprises 450 residues: tRNA modification GTPase MnmE (450 aa).

(6S)-5-formyl-5,6,7,8-tetrahydrofolate-binding residues include arginine 26, glutamate 84, and lysine 123. The 158-residue stretch at 219-376 folds into the TrmE-type G domain; it reads GMHVVLVGQP…LKAKLLEMIG (158 aa). Residue asparagine 229 participates in K(+) binding. GTP-binding positions include 229–234, 248–254, 273–276, and 357–359; these read NVGKSS, TDIAGTT, DTAG, and SAR. Position 233 (serine 233) interacts with Mg(2+). Residues threonine 248, isoleucine 250, and threonine 253 each contribute to the K(+) site. Threonine 254 provides a ligand contact to Mg(2+). Lysine 450 serves as a coordination point for (6S)-5-formyl-5,6,7,8-tetrahydrofolate.

The protein belongs to the TRAFAC class TrmE-Era-EngA-EngB-Septin-like GTPase superfamily. TrmE GTPase family. In terms of assembly, homodimer. Heterotetramer of two MnmE and two MnmG subunits. Requires K(+) as cofactor.

The protein resides in the cytoplasm. Functionally, exhibits a very high intrinsic GTPase hydrolysis rate. Involved in the addition of a carboxymethylaminomethyl (cmnm) group at the wobble position (U34) of certain tRNAs, forming tRNA-cmnm(5)s(2)U34. The sequence is that of tRNA modification GTPase MnmE from Chromobacterium violaceum (strain ATCC 12472 / DSM 30191 / JCM 1249 / CCUG 213 / NBRC 12614 / NCIMB 9131 / NCTC 9757 / MK).